Consider the following 452-residue polypeptide: TKKVKEVTKEYEVQNKHKPLWTRDPKDVTKEEYAAFYKAISNDWEDPMATKHFSVEGQLEFRSIMFVPKRAPFDMFEPNKKRNNIKLYVRRVFIMDNCEDLCPDWLGFVKGVVDSEDLPLNISRENLQQNKILKVIRKNIVKKCLEMFDEVAENKEDYKQFYEQFGKNIKLGIHEDTANPKKLMEFLRFYSTESGLEMTTLKDYVTRMKEGQKSIYYITGDSKKKLESSPFIEQARRRGLEVLFMTEPIDEYVMQQVKDFEDKKFACLTKEGVHFEESEEEKQQREEEKAACEKRCKTMKEVLGDKVEKVTVSDRLSTSPCILVTSEFGWSAHMEQIMRNQAVRDSSMSAYMMSKKTMELNPRHPIIKVLRRRVEADENDKAVKDLVFLLFDTSLLTSGFQLEDPTGYAKRINRMIKLGLSLDEEEEAAEATVVETAPAEVTVGTSSMEQVD.

Residue Arg-124 coordinates ATP. Positions 448 to 452 (MEQVD) match the TPR repeat-binding motif.

The protein belongs to the heat shock protein 90 family. As to quaternary structure, homodimer.

It is found in the cytoplasm. Functionally, molecular chaperone that promotes the maturation, structural maintenance and proper regulation of specific target proteins involved for instance in cell cycle control and signal transduction. Undergoes a functional cycle that is linked to its ATPase activity. This cycle probably induces conformational changes in the client proteins, thereby causing their activation. Interacts dynamically with various co-chaperones that modulate its substrate recognition, ATPase cycle and chaperone function. The sequence is that of Heat shock protein 83 (HSP83) from Leishmania donovani.